A 344-amino-acid polypeptide reads, in one-letter code: C-C chemokine receptor-like 2 (344 aa).

Over 1-43 the chain is Extracellular; that stretch reads MANYTLAPEDEYDVLIEGELESDEAEQCDKYDAQALSAQLVPS. Residue Asn-3 is glycosylated (N-linked (GlcNAc...) asparagine). A helical membrane pass occupies residues 44–64; sequence LCSAVFVIGVLDNLLVVLILV. Over 65–74 the chain is Cytoplasmic; that stretch reads KYKGLKRVEN. A helical transmembrane segment spans residues 75-95; it reads IYLLNLAVSNLCFLLTLPFWA. Over 96–104 the chain is Extracellular; the sequence is HAGGDPMCK. Cys-103 and Cys-181 are disulfide-bonded. A helical transmembrane segment spans residues 105–125; the sequence is ILIGLYFVGLYSETFFNCLLT. Topologically, residues 126–144 are cytoplasmic; the sequence is VQRYLVFLHKGNFFSARRR. A helical membrane pass occupies residues 145–165; sequence VPCGIITSVLAWVTAILATLP. At 166-198 the chain is on the extracellular side; sequence EFVVYKPQMEDQKYKCAFSRTPFLPADETFWKH. A helical membrane pass occupies residues 199-219; it reads FLTLKMNISVLVLPLFIFTFL. Residues 220–238 are Cytoplasmic-facing; that stretch reads YVQMRKTLRFREQRYSLFK. Residues 239 to 259 traverse the membrane as a helical segment; the sequence is LVFAIMVVFLLMWAPYNIAFF. Over 260–286 the chain is Extracellular; that stretch reads LSTFKEHFSLSDCKSSYNLDKSVHITK. The chain crosses the membrane as a helical span at residues 287-307; the sequence is LIATTHCCINPLLYAFLDGTF. Topologically, residues 308-344 are cytoplasmic; that stretch reads SKYLCRCFHLRSNTPLQPRGQSAQGTSREEPDHSTEV. The segment covering 324–333 has biased composition (polar residues); it reads QPRGQSAQGT. The disordered stretch occupies residues 324 to 344; it reads QPRGQSAQGTSREEPDHSTEV. The segment covering 334 to 344 has biased composition (basic and acidic residues); sequence SREEPDHSTEV.

This sequence belongs to the G-protein coupled receptor 1 family. Expressed abundantly in immunal tissues such as spleen, fetal liver, lymph node and bone marrow. Strong expression also in lung and heart. Expressed in almost all hematopoietic cells including monocytes, macrophages, PMNs, T-cells (both CD4+ and CD8+), monocyte-derived iDCs, NK cells, and CD34+ progenitor cells. B-cells expressed isoform 1 but not isoform 2. Up-regulated on synovial neutrophils of rheumatoid arthritis patients.

Its subcellular location is the cell membrane. Functionally, receptor for CCL19 and chemerin/RARRES2. Does not appear to be a signaling receptor, but may have a role in modulating chemokine-triggered immune responses by capturing and internalizing CCL19 or by presenting RARRES2 ligand to CMKLR1, a functional signaling receptors. Plays a critical role for the development of Th2 responses. This Homo sapiens (Human) protein is C-C chemokine receptor-like 2 (CCRL2).